Consider the following 637-residue polypeptide: 1-deoxy-D-xylulose-5-phosphate synthase (637 aa).

Thiamine diphosphate-binding positions include His71 and Ser112–Ala114. Asp144 contacts Mg(2+). Thiamine diphosphate contacts are provided by residues Gly145–Ala146, Asn173, Tyr284, and Glu365. A Mg(2+)-binding site is contributed by Asn173.

Belongs to the transketolase family. DXPS subfamily. In terms of assembly, homodimer. It depends on Mg(2+) as a cofactor. Requires thiamine diphosphate as cofactor.

The enzyme catalyses D-glyceraldehyde 3-phosphate + pyruvate + H(+) = 1-deoxy-D-xylulose 5-phosphate + CO2. The protein operates within metabolic intermediate biosynthesis; 1-deoxy-D-xylulose 5-phosphate biosynthesis; 1-deoxy-D-xylulose 5-phosphate from D-glyceraldehyde 3-phosphate and pyruvate: step 1/1. In terms of biological role, catalyzes the acyloin condensation reaction between C atoms 2 and 3 of pyruvate and glyceraldehyde 3-phosphate to yield 1-deoxy-D-xylulose-5-phosphate (DXP). This Mycolicibacterium gilvum (strain PYR-GCK) (Mycobacterium gilvum (strain PYR-GCK)) protein is 1-deoxy-D-xylulose-5-phosphate synthase.